A 314-amino-acid chain; its full sequence is Methionyl-tRNA formyltransferase (314 aa).

Residue 112-115 (SLLP) participates in (6S)-5,6,7,8-tetrahydrofolate binding.

This sequence belongs to the Fmt family.

It catalyses the reaction L-methionyl-tRNA(fMet) + (6R)-10-formyltetrahydrofolate = N-formyl-L-methionyl-tRNA(fMet) + (6S)-5,6,7,8-tetrahydrofolate + H(+). Functionally, attaches a formyl group to the free amino group of methionyl-tRNA(fMet). The formyl group appears to play a dual role in the initiator identity of N-formylmethionyl-tRNA by promoting its recognition by IF2 and preventing the misappropriation of this tRNA by the elongation apparatus. The sequence is that of Methionyl-tRNA formyltransferase from Legionella pneumophila (strain Paris).